The sequence spans 404 residues: Cysteine desulfurase IscS (404 aa).

Pyridoxal 5'-phosphate-binding positions include 73 to 74 (AT), Asn-153, Gln-181, and 201 to 203 (SAH). Position 204 is an N6-(pyridoxal phosphate)lysine (Lys-204). Thr-241 serves as a coordination point for pyridoxal 5'-phosphate. The active-site Cysteine persulfide intermediate is the Cys-327. Cys-327 contributes to the [2Fe-2S] cluster binding site.

This sequence belongs to the class-V pyridoxal-phosphate-dependent aminotransferase family. NifS/IscS subfamily. In terms of assembly, homodimer. Forms a heterotetramer with IscU, interacts with other sulfur acceptors. It depends on pyridoxal 5'-phosphate as a cofactor.

The protein resides in the cytoplasm. It catalyses the reaction (sulfur carrier)-H + L-cysteine = (sulfur carrier)-SH + L-alanine. It participates in cofactor biosynthesis; iron-sulfur cluster biosynthesis. Functionally, master enzyme that delivers sulfur to a number of partners involved in Fe-S cluster assembly, tRNA modification or cofactor biosynthesis. Catalyzes the removal of elemental sulfur atoms from cysteine to produce alanine. Functions as a sulfur delivery protein for Fe-S cluster synthesis onto IscU, an Fe-S scaffold assembly protein, as well as other S acceptor proteins. In Anaeromyxobacter dehalogenans (strain 2CP-C), this protein is Cysteine desulfurase IscS.